A 300-amino-acid chain; its full sequence is ATP-dependent (S)-NAD(P)H-hydrate dehydratase (300 aa).

The 292-residue stretch at 6 to 297 (YAGKIKEFIP…GCIHQSFTSL (292 aa)) folds into the YjeF C-terminal domain. (6S)-NADPHX-binding positions include Gly106 and 158-164 (NEVEFKR). ATP is bound by residues 188–192 (KGSTD) and 218–227 (GSNRRCGGQG). Asp228 contributes to the (6S)-NADPHX binding site.

It belongs to the NnrD/CARKD family. The cofactor is Mg(2+).

The catalysed reaction is (6S)-NADHX + ATP = ADP + phosphate + NADH + H(+). It catalyses the reaction (6S)-NADPHX + ATP = ADP + phosphate + NADPH + H(+). Its function is as follows. Catalyzes the dehydration of the S-form of NAD(P)HX at the expense of ATP, which is converted to ADP. Together with NAD(P)HX epimerase, which catalyzes the epimerization of the S- and R-forms, the enzyme allows the repair of both epimers of NAD(P)HX, a damaged form of NAD(P)H that is a result of enzymatic or heat-dependent hydration. The polypeptide is ATP-dependent (S)-NAD(P)H-hydrate dehydratase (Pediculus humanus subsp. corporis (Body louse)).